The primary structure comprises 164 residues: Transcription elongation factor GreA (164 aa).

Residues 50–75 are a coiled coil; that stretch reads YHAAREEQGQQEARIRQLQDLLNIAK.

Belongs to the GreA/GreB family.

In terms of biological role, necessary for efficient RNA polymerase transcription elongation past template-encoded arresting sites. The arresting sites in DNA have the property of trapping a certain fraction of elongating RNA polymerases that pass through, resulting in locked ternary complexes. Cleavage of the nascent transcript by cleavage factors such as GreA or GreB allows the resumption of elongation from the new 3'terminus. GreA releases sequences of 2 to 3 nucleotides. The chain is Transcription elongation factor GreA from Mycobacterium leprae (strain Br4923).